Here is a 549-residue protein sequence, read N- to C-terminus: Ankyrin repeat domain-containing protein SOWAHA (549 aa).

An N-terminal signal peptide occupies residues 1–17 (MALAAAAAAAAAGVSQA). 2 disordered regions span residues 82–219 (KPRP…PCML) and 235–256 (EEPGLRRQLSEEPSPRSSPLLL). The segment covering 203-216 (PGPGAAKGPPQQKP) has biased composition (low complexity). A compositionally biased stretch (basic and acidic residues) spans 235–248 (EEPGLRRQLSEEPS). A Phosphoserine modification is found at serine 260. 2 ANK repeats span residues 345–374 (SGFTALHWAAKSGDGEMALQLVEVARRSGA) and 384–414 (GGYTPLHLAALHGHEDAAVLLVVRLGAQVHV). Residues 513–549 (PRKKTKIRGGLPAFSEISRRPTPGPLAGLVPSLPPTT) form a disordered region.

This sequence belongs to the SOWAH family.

The polypeptide is Ankyrin repeat domain-containing protein SOWAHA (SOWAHA) (Homo sapiens (Human)).